We begin with the raw amino-acid sequence, 706 residues long: Methionine--tRNA ligase (706 aa).

The short motif at 13–23 (PYANGNFHIGH) is the 'HIGH' region element. 4 residues coordinate Zn(2+): C144, C147, C157, and C160. The 'KMSKS' region motif lies at 341-345 (KMSKS). K344 provides a ligand contact to ATP. The 107-residue stretch at 600–706 (DFAKIDLRIA…PGATPGMRVR (107 aa)) folds into the tRNA-binding domain.

It belongs to the class-I aminoacyl-tRNA synthetase family. MetG type 1 subfamily. In terms of assembly, homodimer. It depends on Zn(2+) as a cofactor.

It localises to the cytoplasm. It catalyses the reaction tRNA(Met) + L-methionine + ATP = L-methionyl-tRNA(Met) + AMP + diphosphate. Is required not only for elongation of protein synthesis but also for the initiation of all mRNA translation through initiator tRNA(fMet) aminoacylation. The polypeptide is Methionine--tRNA ligase (Paracidovorax citrulli (strain AAC00-1) (Acidovorax citrulli)).